Here is a 517-residue protein sequence, read N- to C-terminus: Ribonuclease Y (517 aa).

A helical transmembrane segment spans residues 4–24 (LIYIVILFVGIAAGAFFGISV). The KH domain occupies 207–267 (TISTVALPND…LRREVARRTI (61 aa)). The 94-residue stretch at 333 to 426 (VLAHSVEVAQ…VAAADAISAA (94 aa)) folds into the HD domain.

The protein belongs to the RNase Y family.

It localises to the cell membrane. Endoribonuclease that initiates mRNA decay. The protein is Ribonuclease Y of Fervidobacterium nodosum (strain ATCC 35602 / DSM 5306 / Rt17-B1).